We begin with the raw amino-acid sequence, 265 residues long: Tryptophan synthase alpha chain (265 aa).

Active-site proton acceptor residues include Glu-48 and Asp-59.

This sequence belongs to the TrpA family. Tetramer of two alpha and two beta chains.

The enzyme catalyses (1S,2R)-1-C-(indol-3-yl)glycerol 3-phosphate + L-serine = D-glyceraldehyde 3-phosphate + L-tryptophan + H2O. The protein operates within amino-acid biosynthesis; L-tryptophan biosynthesis; L-tryptophan from chorismate: step 5/5. Its function is as follows. The alpha subunit is responsible for the aldol cleavage of indoleglycerol phosphate to indole and glyceraldehyde 3-phosphate. The chain is Tryptophan synthase alpha chain from Pelagibacter ubique (strain HTCC1062).